We begin with the raw amino-acid sequence, 158 residues long: 2-C-methyl-D-erythritol 2,4-cyclodiphosphate synthase (158 aa).

2 residues coordinate a divalent metal cation: Asp-9 and His-11. Residues 9–11 (DVH) and 35–36 (HS) each bind 4-CDP-2-C-methyl-D-erythritol 2-phosphate. A divalent metal cation is bound at residue His-43. 4-CDP-2-C-methyl-D-erythritol 2-phosphate-binding positions include 57–59 (DIG), 62–66 (FPDTD), 133–136 (TTTE), Phe-140, and Arg-143.

Belongs to the IspF family. As to quaternary structure, homotrimer. A divalent metal cation is required as a cofactor.

The enzyme catalyses 4-CDP-2-C-methyl-D-erythritol 2-phosphate = 2-C-methyl-D-erythritol 2,4-cyclic diphosphate + CMP. It participates in isoprenoid biosynthesis; isopentenyl diphosphate biosynthesis via DXP pathway; isopentenyl diphosphate from 1-deoxy-D-xylulose 5-phosphate: step 4/6. In terms of biological role, involved in the biosynthesis of isopentenyl diphosphate (IPP) and dimethylallyl diphosphate (DMAPP), two major building blocks of isoprenoid compounds. Catalyzes the conversion of 4-diphosphocytidyl-2-C-methyl-D-erythritol 2-phosphate (CDP-ME2P) to 2-C-methyl-D-erythritol 2,4-cyclodiphosphate (ME-CPP) with a corresponding release of cytidine 5-monophosphate (CMP). The chain is 2-C-methyl-D-erythritol 2,4-cyclodiphosphate synthase from Actinobacillus pleuropneumoniae serotype 5b (strain L20).